We begin with the raw amino-acid sequence, 1137 residues long: Phytochrome C (1137 aa).

Over residues 1-18 (MSSSRSNNRATCSRSSSA) the composition is skewed to low complexity. The disordered stretch occupies residues 1–27 (MSSSRSNNRATCSRSSSARSKHSARVV). The GAF domain occupies 217–400 (NLSLLCDVLV…VFGIQINKEV (184 aa)). Position 322 (C322) interacts with phytochromobilin. PAS domains lie at 620–690 (VTNE…LQGI) and 750–824 (IQGD…TKLS). The Histidine kinase domain occupies 904-1124 (YIRQELRNPL…IVLVEFPVAQ (221 aa)).

Belongs to the phytochrome family. Homodimer. Contains one covalently linked phytochromobilin chromophore.

Regulatory photoreceptor which exists in two forms that are reversibly interconvertible by light: the Pr form that absorbs maximally in the red region of the spectrum and the Pfr form that absorbs maximally in the far-red region. Photoconversion of Pr to Pfr induces an array of morphogenic responses, whereas reconversion of Pfr to Pr cancels the induction of those responses. Pfr controls the expression of a number of nuclear genes including those encoding the small subunit of ribulose-bisphosphate carboxylase, chlorophyll A/B binding protein, protochlorophyllide reductase, rRNA, etc. It also controls the expression of its own gene(s) in a negative feedback fashion. This chain is Phytochrome C (PHYC), found in Oryza sativa subsp. indica (Rice).